Consider the following 509-residue polypeptide: Methylmalonyl-CoA decarboxylase subunit alpha (509 aa).

In terms of domain architecture, CoA carboxyltransferase N-terminal spans 4–260 (VQEKIELLHE…NNMEDAPLVD (257 aa)). Residues 267-503 (REDESLNSLL…SKRENRAPKK (237 aa)) enclose the CoA carboxyltransferase C-terminal domain.

Belongs to the AccD/PCCB family. The methylmalonyl-CoA decarboxylase is composed of five subunits: the carboxyltransferase alpha subunit (MmdA), the tunnel beta subunit (MmdB), the biotin-containing gamma subunit (MmdC), and the delta (MmdD) and epsilon (MmdE) subunits. Interacts with the gamma subunit.

It localises to the cell membrane. The enzyme catalyses (S)-methylmalonyl-CoA + Na(+)(in) + H(+)(out) = propanoyl-CoA + Na(+)(out) + CO2. Its activity is regulated as follows. Completely inhibited by avidin. Its function is as follows. Carboxyltransferase subunit of the sodium ion pump methylmalonyl-CoA decarboxylase, which converts the chemical energy of a decarboxylation reaction into an electrochemical gradient of Na(+) ions across the cytoplasmic membrane, thereby creating a sodium ion motive force that is used for ATP synthesis. The alpha subunit catalyzes the Na(+)-independent carboxyltransfer from methylmalonyl-CoA to the prosthetic biotin group located on the gamma subunit. Can also convert malonyl-CoA into acetyl-CoA. In Veillonella parvula (Staphylococcus parvulus), this protein is Methylmalonyl-CoA decarboxylase subunit alpha.